Reading from the N-terminus, the 374-residue chain is Chaperone protein DnaJ (374 aa).

The J domain maps to 4–68 (DYYEILGVSR…ETRNRYDRFG (65 aa)). The CR-type zinc-finger motif lies at 133-215 (GGEKEIRIRH…CGGSGRRQET (83 aa)). Residues Cys146, Cys149, Cys163, Cys166, Cys189, Cys192, Cys203, and Cys206 each coordinate Zn(2+). CXXCXGXG motif repeat units follow at residues 146–153 (CQTCKGSG), 163–170 (CTTCSGTG), 189–196 (CPTCDGAG), and 203–210 (CDVCGGSG).

This sequence belongs to the DnaJ family. Homodimer. Requires Zn(2+) as cofactor.

Its subcellular location is the cytoplasm. Its function is as follows. Participates actively in the response to hyperosmotic and heat shock by preventing the aggregation of stress-denatured proteins and by disaggregating proteins, also in an autonomous, DnaK-independent fashion. Unfolded proteins bind initially to DnaJ; upon interaction with the DnaJ-bound protein, DnaK hydrolyzes its bound ATP, resulting in the formation of a stable complex. GrpE releases ADP from DnaK; ATP binding to DnaK triggers the release of the substrate protein, thus completing the reaction cycle. Several rounds of ATP-dependent interactions between DnaJ, DnaK and GrpE are required for fully efficient folding. Also involved, together with DnaK and GrpE, in the DNA replication of plasmids through activation of initiation proteins. In Microcystis aeruginosa (strain NIES-843 / IAM M-2473), this protein is Chaperone protein DnaJ.